Reading from the N-terminus, the 4690-residue chain is Nonribosomal peptide synthetase sidN (4690 aa).

The segment at 238-656 (ARVRENPGRI…LGRLSSDQIK (419 aa)) is adenylation 1. A Carrier 1 domain is found at 779–856 (SSSIPMLQSV…DLDTKAQQAL (78 aa)). An O-(pantetheine 4'-phosphoryl)serine modification is found at Ser816. Positions 925-1175 (PGGKAFIQHT…AFGNTMSGRF (251 aa)) are condensation 1. Residues 1349-1760 (EFAQKSPNAI…GRKDDLVKIR (412 aa)) are adenylation 2. One can recognise a Carrier 2 domain in the interval 1889–1965 (PAWCIKHRPL…DLINHLSVKR (77 aa)). An O-(pantetheine 4'-phosphoryl)serine modification is found at Ser1926. Residues 2001–2285 (PTTVFQDGML…SERLLESQLV (285 aa)) form a condensation 2 region. Residues 2464–2869 (TWAKTHPEWK…GRKDEQVKVR (406 aa)) form an adenylation 3 region. The region spanning 3002–3079 (RDLTSIEKQI…ELGRMKNALK (78 aa)) is the Carrier 3 domain. Residue Ser3040 is modified to O-(pantetheine 4'-phosphoryl)serine. The segment at 3121 to 3530 (CMPLQEVLVA…QMESLVTSFT (410 aa)) is condensation 3. The 74-residue stretch at 3564 to 3637 (SVLEQQIRDV…KLATHIQTTS (74 aa)) folds into the Carrier 4 domain. The residue at position 3598 (Ser3598) is an O-(pantetheine 4'-phosphoryl)serine. A condensation 4 region spans residues 3679-4087 (VYPLTPLQAG…FESIRKHPDE (409 aa)). The Carrier 5 domain maps to 4119 to 4195 (SAIDQFLDPL…KLCEVAFAKS (77 aa)). Residue Ser4156 is modified to O-(pantetheine 4'-phosphoryl)serine. Residues 4262 to 4589 (WVFKAENGLD…FNAHLNILWN (328 aa)) form a condensation 5 region.

This sequence belongs to the NRP synthetase family.

Its pathway is siderophore biosynthesis. Its function is as follows. Nonribosomal peptide synthetase required for the biosynthetis of epichloenin A, an extracellular siderophore that plays a crucial role in endophyte-grass symbioses. SidN assembles epichloenin A by activating and incorporating three trans-anhydromevalonylhydroxyornithine (trans-AMHO), 1 glutamine and 4 glycine moieties. Trans-AMHO is produced from L-ornithine via 2 steps involving a L-ornithine N(5)-monooxygenase and an AHMO-N(5)-transacylase that have still to be identified. The third adenylation domain (A3) of sidN incorporates the hydroxamate groups of the siderophore which forms an octahedral iron complex. The other component amino acids are assembled by sidN adenylation domains A1 and A2. The sequence is that of Nonribosomal peptide synthetase sidN from Epichloe festucae (strain E2368).